A 414-amino-acid chain; its full sequence is Serine hydroxymethyltransferase (414 aa).

(6S)-5,6,7,8-tetrahydrofolate is bound by residues leucine 117 and 121–123; that span reads GHL. Lysine 226 is modified (N6-(pyridoxal phosphate)lysine).

This sequence belongs to the SHMT family. In terms of assembly, homodimer. It depends on pyridoxal 5'-phosphate as a cofactor.

Its subcellular location is the cytoplasm. It catalyses the reaction (6R)-5,10-methylene-5,6,7,8-tetrahydrofolate + glycine + H2O = (6S)-5,6,7,8-tetrahydrofolate + L-serine. It functions in the pathway one-carbon metabolism; tetrahydrofolate interconversion. The protein operates within amino-acid biosynthesis; glycine biosynthesis; glycine from L-serine: step 1/1. Functionally, catalyzes the reversible interconversion of serine and glycine with tetrahydrofolate (THF) serving as the one-carbon carrier. This reaction serves as the major source of one-carbon groups required for the biosynthesis of purines, thymidylate, methionine, and other important biomolecules. Also exhibits THF-independent aldolase activity toward beta-hydroxyamino acids, producing glycine and aldehydes, via a retro-aldol mechanism. This chain is Serine hydroxymethyltransferase, found in Dictyoglomus turgidum (strain DSM 6724 / Z-1310).